The primary structure comprises 1214 residues: Genome polyprotein (1214 aa).

In terms of domain architecture, SF3 helicase spans 1–55 (NKGKTFTSKYVIMTSNTETPVKPTSRRAGAFYRRVMIVDVTNNAVEKWKSDNPGK). Y428 bears the O-(5'-phospho-RNA)-tyrosine mark. Residues 523–676 (GVAHKNAIVS…KLIVPYAKVD (154 aa)) enclose the Peptidase C24 domain. Catalysis depends on for 3CLpro activity residues H557, E578, and C640. Residues 926–1051 (HDRYCVDYSK…IVPPLISSVM (126 aa)) enclose the RdRp catalytic domain.

Post-translationally, specific enzymatic cleavages in vivo yield mature proteins. Pro-Pol is first autocatalytically cleaved, then processes the whole polyprotein. VPg is uridylylated by the polymerase and is covalently attached to the 5'-end of the polyadenylated genomic and subgenomic RNAs. This uridylylated form acts as a nucleotide-peptide primer for the polymerase.

The enzyme catalyses a ribonucleoside 5'-triphosphate + H2O = a ribonucleoside 5'-diphosphate + phosphate + H(+). The catalysed reaction is RNA(n) + a ribonucleoside 5'-triphosphate = RNA(n+1) + diphosphate. It catalyses the reaction Endopeptidase with a preference for cleavage when the P1 position is occupied by Glu-|-Xaa and the P1' position is occupied by Gly-|-Yaa.. Functionally, NTPase presumably plays a role in replication. Despite having similarities with helicases, does not seem to display any helicase activity. In terms of biological role, viral genome-linked protein is covalently linked to the 5'-end of the positive-strand, negative-strand genomic RNAs and subgenomic RNA. Acts as a genome-linked replication primer. May recruit ribosome to viral RNA thereby promoting viral proteins translation. Its function is as follows. Protease-polymerase p76 processes the polyprotein: Pro-Pol is first released by autocleavage, then all other proteins are cleaved. Cleaves host translation initiation factor eIF4G1 and eIF4G2 thereby inducing a shutdown of host protein synthesis. This shutdown may not prevent viral mRNA from being translated since viral Vpg replaces the cap. May cleave host polyadenylate-binding protein thereby inhibiting cellular translation. It is also an RNA-directed RNA polymerase which replicates genomic and antigenomic viral RNA by recognizing specific signals. Also transcribes a subgenomic mRNA by initiating RNA synthesis internally on antigenomic RNA. This sgRNA codes for structural proteins. Catalyzes the covalent attachment VPg with viral RNAs. This chain is Genome polyprotein, found in San Miguel sea lion virus serotype 4 (SMSV-4).